The primary structure comprises 510 residues: D-allose import ATP-binding protein AlsA (510 aa).

2 ABC transporter domains span residues 6–245 and 260–509; these read ISMA…VGRE and LAHE…ALPQ. Position 38–45 (38–45) interacts with ATP; that stretch reads GENGAGKS.

The protein belongs to the ABC transporter superfamily. D-allose importer (TC 3.A.1.2.6) family. As to quaternary structure, the complex is composed of two ATP-binding proteins (AlsA), two transmembrane proteins (AlsC) and a solute-binding protein (AlsB).

It localises to the cell inner membrane. The catalysed reaction is D-allose(out) + ATP + H2O = D-allose(in) + ADP + phosphate + H(+). Part of the ABC transporter complex AlsBAC involved in D-allose import. Probably responsible for energy coupling to the transport system. The polypeptide is D-allose import ATP-binding protein AlsA (alsA) (Escherichia coli (strain K12)).